The sequence spans 121 residues: Large ribosomal subunit protein bL12 (121 aa).

It belongs to the bacterial ribosomal protein bL12 family. In terms of assembly, homodimer. Part of the ribosomal stalk of the 50S ribosomal subunit. Forms a multimeric L10(L12)X complex, where L10 forms an elongated spine to which 2 to 4 L12 dimers bind in a sequential fashion. Binds GTP-bound translation factors.

Forms part of the ribosomal stalk which helps the ribosome interact with GTP-bound translation factors. Is thus essential for accurate translation. This chain is Large ribosomal subunit protein bL12, found in Pelagibacter ubique (strain HTCC1062).